Reading from the N-terminus, the 204-residue chain is FMN-dependent NADH:quinone oxidoreductase 5 (204 aa).

Ser10 is a binding site for FMN.

Belongs to the azoreductase type 1 family. As to quaternary structure, homodimer. FMN serves as cofactor.

The enzyme catalyses 2 a quinone + NADH + H(+) = 2 a 1,4-benzosemiquinone + NAD(+). It catalyses the reaction N,N-dimethyl-1,4-phenylenediamine + anthranilate + 2 NAD(+) = 2-(4-dimethylaminophenyl)diazenylbenzoate + 2 NADH + 2 H(+). Functionally, quinone reductase that provides resistance to thiol-specific stress caused by electrophilic quinones. Its function is as follows. Also exhibits azoreductase activity. Catalyzes the reductive cleavage of the azo bond in aromatic azo compounds to the corresponding amines. This Burkholderia lata (strain ATCC 17760 / DSM 23089 / LMG 22485 / NCIMB 9086 / R18194 / 383) protein is FMN-dependent NADH:quinone oxidoreductase 5.